The chain runs to 217 residues: Somatotropin (217 aa).

Positions 1–26 (MMAAGPRTSLLLAFALLCLPWTQVVG) are cleaved as a signal peptide. H46 provides a ligand contact to Zn(2+). Residues C79 and C190 are joined by a disulfide bond. S132 carries the post-translational modification Phosphoserine. E199 provides a ligand contact to Zn(2+). C207 and C215 are disulfide-bonded.

This sequence belongs to the somatotropin/prolactin family.

The protein resides in the secreted. In terms of biological role, plays an important role in growth control. Its major role in stimulating body growth is to stimulate the liver and other tissues to secrete IGF1. It stimulates both the differentiation and proliferation of myoblasts. It also stimulates amino acid uptake and protein synthesis in muscle and other tissues. This is Somatotropin (GH1) from Bos taurus (Bovine).